The following is a 201-amino-acid chain: DNA polymerase epsilon subunit C (201 aa).

2 disordered regions span residues 102-165 (KKRE…KSTR) and 178-201 (SALDVGEHSDSSDIEVDHTKSTDP). Over residues 117–144 (VVIEEPELHEDDGVEEEEEEDEVSEEEE) the composition is skewed to acidic residues. 2 stretches are compositionally biased toward basic and acidic residues: residues 145–164 (PVHNEELLDDSKDQQNDKST) and 182–201 (VGEHSDSSDIEVDHTKSTDP). A phosphoserine mark is found at serine 186, serine 188, and serine 189.

DNA polymerase epsilon is a heterotetramer consisting of POL2, DPB2, DPB3 and DPB4.

Its subcellular location is the nucleus. Functionally, as accessory component of the DNA polymerase epsilon (DNA polymerase II) participates in chromosomal DNA replication. It is required during synthesis of the leading and lagging DNA strands at the replication fork and binds at/or near replication origins and moves along DNA with the replication fork. It has 3'-5' proofreading exonuclease activity that correct errors arising during DNA replication. It is also involved in DNA synthesis during DNA repair. The chain is DNA polymerase epsilon subunit C (DPB3) from Saccharomyces cerevisiae (strain ATCC 204508 / S288c) (Baker's yeast).